Consider the following 210-residue polypeptide: Outer surface protein C (210 aa).

The first 18 residues, 1–18, serve as a signal peptide directing secretion; sequence MKKNTLSAILMTLFLFIS. Cys-19 is lipidated: N-palmitoyl cysteine. Cys-19 carries the S-diacylglycerol cysteine lipid modification.

This sequence belongs to the OspC lipoprotein family. As to quaternary structure, homodimer. Binds human plasminogen on the bacterial surface, also binds human plasmin. Interacts with tick I.ricinus salivary protein Iric-1. Interacts with human complement C4 beta chain (C4B); whole bacteria bind to wells coated with C4b. Binding is inhibited by human complement factor C2.

It localises to the cell outer membrane. It is found in the cell surface. A major immunodominant protein in mammalian hosts. Required for the initial stages of mammalian infection. Interaction with tick I.ricinus salivary protein Salp15 protects the bacteria from antibody-mediated killing in vitro and in vivo. Inhibits macrophage-mediated phagocytosis of the bacteria. Binds human plasminogen; this probably confers an extracellular protease activity on the bacteria that allows it to traverse tissue. Binds human complement C4-B, which may inhibit the complement cascade. Experiments in mice suggest it may play another role after initial infection. The chain is Outer surface protein C from Borreliella burgdorferi (strain ATCC 35210 / DSM 4680 / CIP 102532 / B31) (Borrelia burgdorferi).